A 352-amino-acid polypeptide reads, in one-letter code: Maleylacetate reductase (352 aa).

It belongs to the iron-containing alcohol dehydrogenase family.

The catalysed reaction is 3-oxoadipate + NAD(+) = maleylacetate + NADH + H(+). The enzyme catalyses 3-oxoadipate + NADP(+) = maleylacetate + NADPH + H(+). The protein operates within xenobiotic degradation; (2,4,5-trichlorophenoxy)acetate degradation. The chain is Maleylacetate reductase (tftE) from Burkholderia cepacia (Pseudomonas cepacia).